The following is a 426-amino-acid chain: D-tagatose-1,6-bisphosphate aldolase subunit KbaZ (426 aa).

The protein belongs to the GatZ/KbaZ family. KbaZ subfamily. As to quaternary structure, forms a complex with KbaY.

Its pathway is carbohydrate metabolism; D-tagatose 6-phosphate degradation; D-glyceraldehyde 3-phosphate and glycerone phosphate from D-tagatose 6-phosphate: step 2/2. Component of the tagatose-1,6-bisphosphate aldolase KbaYZ that is required for full activity and stability of the Y subunit. Could have a chaperone-like function for the proper and stable folding of KbaY. When expressed alone, KbaZ does not show any aldolase activity. The chain is D-tagatose-1,6-bisphosphate aldolase subunit KbaZ from Escherichia coli O157:H7.